The primary structure comprises 405 residues: MESKIYTVSEVTGRITELLTSDSVLNDLWITGEISNFHHHNSGHMYFTIKDERSCIKSIMFRGYNRKLKFEPEDGLKVNAHGYVGVYKPRGDYQFYVDHLEPAGKGALYLAFEQLKEKLEKEGLFNEDHKKEIPLLPRKIGVVTSPTGAAIRDILSVVKRRFKNVSVLIVPSLVQGKKAAREIVEGIEYLNSRDDIDVIIVSRGGGSIEELWSFNEEVVARAIYNSRIPVISGVGHETDFTIADFVADLRAPTPSAAAELAISNRIELEKHLVNLYTRLYNSVSYQIKSYRDRLNSLSLKKVLTRPEELFIQKIQYVDELSRRLDWAMEGRLKDAREKFRVLSGKLDSLSPLKTIERGYSITLKGSEPINSITQVDIGDVIRSRLSDGIILSQVKRTMKEGEQDG.

This sequence belongs to the XseA family. Heterooligomer composed of large and small subunits.

The protein localises to the cytoplasm. The enzyme catalyses Exonucleolytic cleavage in either 5'- to 3'- or 3'- to 5'-direction to yield nucleoside 5'-phosphates.. Bidirectionally degrades single-stranded DNA into large acid-insoluble oligonucleotides, which are then degraded further into small acid-soluble oligonucleotides. The protein is Exodeoxyribonuclease 7 large subunit of Halothermothrix orenii (strain H 168 / OCM 544 / DSM 9562).